We begin with the raw amino-acid sequence, 93 residues long: Small ribosomal subunit protein uS19c (93 aa).

It belongs to the universal ribosomal protein uS19 family.

It localises to the plastid. The protein localises to the chloroplast. Its function is as follows. Protein S19 forms a complex with S13 that binds strongly to the 16S ribosomal RNA. The chain is Small ribosomal subunit protein uS19c from Ipomoea purpurea (Common morning glory).